Here is a 264-residue protein sequence, read N- to C-terminus: Rhodanese-like domain-containing protein 4A, chloroplastic (264 aa).

The transit peptide at 1–60 (MTSLPIILASSPLRNLTKPCSTSQIPKPIQNSTKQPPIHLLTKTNLSVTISQLIITSPVL) directs the protein to the chloroplast. A helical membrane pass occupies residues 95 to 115 (FFVAGCTFTYLVVYPAVMFYL). Residues 132–232 (NESDSQLLDI…ARGKNGWLAI (101 aa)) form the Rhodanese domain.

The protein localises to the plastid. It is found in the chloroplast. Its subcellular location is the membrane. This chain is Rhodanese-like domain-containing protein 4A, chloroplastic (STR4A), found in Arabidopsis thaliana (Mouse-ear cress).